We begin with the raw amino-acid sequence, 319 residues long: uncharacterized protein (319 aa).

The segment at 21–70 (ETETLKNSTDEVQTSSSFSSSGGRQSSPLTSGSKLEREKQTPSLEQGDTQ) is disordered. The span at 25–34 (LKNSTDEVQT) shows a compositional bias: polar residues. The segment covering 35–51 (SSSFSSSGGRQSSPLTS) has biased composition (low complexity). Polar residues predominate over residues 61 to 70 (TPSLEQGDTQ).

This is an uncharacterized protein from Homo sapiens (Human).